A 216-amino-acid chain; its full sequence is Gamma-glutamylcyclotransferase 2-1 (216 aa).

Position 5–10 (V5–S10) interacts with substrate. Residue E87 is the Proton acceptor of the active site.

This sequence belongs to the gamma-glutamylcyclotransferase family. Mn(2+) is required as a cofactor. Expressed in the central vascular bundle of roots, leaf veins, hydathodes, cauline leaves, shoot apex, sepal veins, flower receptacles and developing seeds.

It localises to the cytoplasm. It catalyses the reaction an alpha-(gamma-L-glutamyl)-L-amino acid = 5-oxo-L-proline + an L-alpha-amino acid. In terms of biological role, catalyzes the formation of 5-oxoproline from gamma-glutamyl dipeptides and plays a significant role in glutathione (GSH) homeostasis. Converts both GSH and gamma-glutamyl-L-alanine to 5-oxoproline in vitro. Plays a role in detoxification of heavy metals and metalloids by recycling glutamate and maintaining GSH homeostasis. This Arabidopsis thaliana (Mouse-ear cress) protein is Gamma-glutamylcyclotransferase 2-1.